The chain runs to 711 residues: Angiogenic factor with G patch and FHA domains 1 (711 aa).

The span at 1-19 (MASEAPSPPSPSPPPPASP) shows a compositional bias: pro residues. 4 disordered regions span residues 1-23 (MASEAPSPPSPSPPPPASPEPEL), 137-184 (ALDP…EGPA), 260-297 (PYQTSSTKPNRERRLKKRRKEPGFYTANEEKDLSSEDQ), and 311-400 (EHSG…EDEE). N-acetylalanine is present on Ala-2. 2 positions are modified to phosphoserine: Ser-7 and Ser-12. A coiled-coil region spans residues 19–85 (PEPELAQLRR…SKILHCGKNE (67 aa)). Over residues 167–176 (AVTSDSQESV) the composition is skewed to polar residues. Residues 270 to 279 (RERRLKKRRK) are compositionally biased toward basic residues. Basic and acidic residues predominate over residues 287-297 (NEEKDLSSEDQ). Ser-344 is modified (phosphoserine). Over residues 361–370 (SESEPEEGEI) the composition is skewed to acidic residues. Residues 374-391 (QSEKSYDGDSSSGDRETS) show a composition bias toward basic and acidic residues. In terms of domain architecture, FHA spans 431 to 484 (ATIGREKDMEHTVRIPEVAVSKFHAEVYFDHDLQSYVLVDQGSQNGTIVNGKQI). 2 stretches are compositionally biased toward basic and acidic residues: residues 579–606 (LKNPKYKDRAGKRREQVGSEGTFQRDDA) and 613–623 (EITDSNKGRKM). The segment at 579 to 623 (LKNPKYKDRAGKRREQVGSEGTFQRDDAPASVHSEITDSNKGRKM) is disordered. Positions 616 to 662 (DSNKGRKMLEKMGWKRGEGLGKDGGGMKTPIQLQLRRTHAGLGTGKL) constitute a G-patch domain. An N6-acetyllysine modification is found at Lys-661. Basic and acidic residues predominate over residues 690–699 (FTENKPRKET). Residues 690–711 (FTENKPRKETPGAVPWVTGTAE) are disordered.

In terms of assembly, interacts with the secreted angiogenic factor TNFSF12.

Its subcellular location is the cytoplasm. The protein resides in the secreted. Its function is as follows. Promotes angiogenesis and the proliferation of endothelial cells. Able to bind to endothelial cells and promote cell proliferation, suggesting that it may act in an autocrine fashion. The sequence is that of Angiogenic factor with G patch and FHA domains 1 (Aggf1) from Mus musculus (Mouse).